The chain runs to 239 residues: Tetrahydromethanopterin S-methyltransferase subunit A (239 aa).

The Cytoplasmic segment spans residues 1–215; that stretch reads MANKKSPAAT…EAAMIAKFNS (215 aa). His-85 lines the 5-hydroxybenzimidazolylcob(I)amide pocket. A helical transmembrane segment spans residues 216–238; sequence GYYNGKIQGIAIGLFLSILVFSL. A topological domain (extracellular) is located at residue Leu-239.

It belongs to the MtrA family. The complex is composed of 8 subunits; MtrA, MtrB, MtrC, MtrD, MtrE, MtrF, MtrG and MtrH. 5-hydroxybenzimidazolylcob(I)amide is required as a cofactor.

It localises to the cell membrane. It catalyses the reaction 5-methyl-5,6,7,8-tetrahydromethanopterin + coenzyme M + 2 Na(+)(in) = 5,6,7,8-tetrahydromethanopterin + methyl-coenzyme M + 2 Na(+)(out). Its pathway is one-carbon metabolism; methanogenesis from CO(2); methyl-coenzyme M from 5,10-methylene-5,6,7,8-tetrahydromethanopterin: step 2/2. Its function is as follows. Part of a complex that catalyzes the formation of methyl-coenzyme M and tetrahydromethanopterin from coenzyme M and methyl-tetrahydromethanopterin. This is an energy-conserving, sodium-ion translocating step. This Methanococcus maripaludis (strain C7 / ATCC BAA-1331) protein is Tetrahydromethanopterin S-methyltransferase subunit A.